A 438-amino-acid polypeptide reads, in one-letter code: Thymidine phosphorylase (438 aa).

Belongs to the thymidine/pyrimidine-nucleoside phosphorylase family. Homodimer.

It carries out the reaction thymidine + phosphate = 2-deoxy-alpha-D-ribose 1-phosphate + thymine. Its pathway is pyrimidine metabolism; dTMP biosynthesis via salvage pathway; dTMP from thymine: step 1/2. The enzymes which catalyze the reversible phosphorolysis of pyrimidine nucleosides are involved in the degradation of these compounds and in their utilization as carbon and energy sources, or in the rescue of pyrimidine bases for nucleotide synthesis. This Burkholderia orbicola (strain AU 1054) protein is Thymidine phosphorylase.